The following is a 319-amino-acid chain: Ribose-phosphate pyrophosphokinase (319 aa).

ATP is bound by residues 40 to 42 (DGE) and 99 to 100 (RQ). Residues His-134 and Asp-174 each coordinate Mg(2+). The active site involves Lys-198. D-ribose 5-phosphate-binding positions include Arg-200, Asp-224, and 228-232 (DTAGT).

It belongs to the ribose-phosphate pyrophosphokinase family. Class I subfamily. In terms of assembly, homohexamer. Mg(2+) is required as a cofactor.

Its subcellular location is the cytoplasm. It catalyses the reaction D-ribose 5-phosphate + ATP = 5-phospho-alpha-D-ribose 1-diphosphate + AMP + H(+). It functions in the pathway metabolic intermediate biosynthesis; 5-phospho-alpha-D-ribose 1-diphosphate biosynthesis; 5-phospho-alpha-D-ribose 1-diphosphate from D-ribose 5-phosphate (route I): step 1/1. In terms of biological role, involved in the biosynthesis of the central metabolite phospho-alpha-D-ribosyl-1-pyrophosphate (PRPP) via the transfer of pyrophosphoryl group from ATP to 1-hydroxyl of ribose-5-phosphate (Rib-5-P). This is Ribose-phosphate pyrophosphokinase from Coxiella burnetii (strain RSA 493 / Nine Mile phase I).